The chain runs to 299 residues: MQNPKPLVIVLLGPTASGKTDLAIQIAKKIKVSIHNIDSRQLYKGMNIGTAKPTIEQQEEIKHYLLDLKDPNNPITLHEFKKEAELSLKNIFSKEKCGFLVGGSGLYLKSLTSGLCPPSVPAQEKLRKEFRRLGQKECHQILKKCDPIAWEKISPRDSIRTIRALEVFYSTGQTISSLKTLKPPDWNLLELGLDPRNLQQRIAKRTKILFQKGLIDETKALIHQYGEDLPLLQTIGYKEACTVIKGEYSITEAIEITTQRTNQFAKKQRTWFRRQHNPKWLNEKNSLEEALSLIQNVIG.

An ATP-binding site is contributed by 13 to 20 (GPTASGKT). Substrate is bound at residue 15-20 (TASGKT). Positions 38–41 (DSRQ) are interaction with substrate tRNA.

The protein belongs to the IPP transferase family. As to quaternary structure, monomer. Mg(2+) is required as a cofactor.

The enzyme catalyses adenosine(37) in tRNA + dimethylallyl diphosphate = N(6)-dimethylallyladenosine(37) in tRNA + diphosphate. Catalyzes the transfer of a dimethylallyl group onto the adenine at position 37 in tRNAs that read codons beginning with uridine, leading to the formation of N6-(dimethylallyl)adenosine (i(6)A). In Prochlorococcus marinus (strain SARG / CCMP1375 / SS120), this protein is tRNA dimethylallyltransferase.